The following is a 359-amino-acid chain: WAT1-related protein At4g16620 (359 aa).

10 helical membrane-spanning segments follow: residues Glu-5–Gly-25, Leu-41–Leu-61, Ile-77–Gly-97, Met-105–Gly-125, Thr-143–Leu-163, Ile-183–Gln-203, Ile-206–Ile-226, Val-246–Gly-266, Pro-279–Phe-299, and Phe-305–Trp-325. The region spanning Leu-30–Ser-154 is the EamA 1 domain. The 119-residue stretch at Ile-206 to Leu-324 folds into the EamA 2 domain.

It belongs to the drug/metabolite transporter (DMT) superfamily. Plant drug/metabolite exporter (P-DME) (TC 2.A.7.4) family.

The protein resides in the membrane. This is WAT1-related protein At4g16620 from Arabidopsis thaliana (Mouse-ear cress).